A 186-amino-acid polypeptide reads, in one-letter code: Ribosome-recycling factor (186 aa).

It belongs to the RRF family.

It localises to the cytoplasm. Responsible for the release of ribosomes from messenger RNA at the termination of protein biosynthesis. May increase the efficiency of translation by recycling ribosomes from one round of translation to another. In Chlorobium phaeobacteroides (strain DSM 266 / SMG 266 / 2430), this protein is Ribosome-recycling factor.